Here is a 271-residue protein sequence, read N- to C-terminus: MLQACKMEGFPLVAPPSDELVTYESELYQRQTHDYYSLIGGDGDSHSDHYWDFSTHHVHSEFESFPENHFTELQSVQPPQLQQLYRHMELEQMHVLDTPMAPPHASLSHQVSYMPRVCFPYPPLSPAHQQSSDEEEGERQSPPLEVSDGEADGLEPGPGLLHGETGSKKKIRLYQFLLDLLRSGDMKDSIWWVDKDKGTFQFSSKHKEALAHRWGIQKGNRKKMTYQKMARALRNYGKTGEVKKVKKKLTYQFSGEVLGRGGLAERRLPPH.

The segment at 124 to 164 (LSPAHQQSSDEEEGERQSPPLEVSDGEADGLEPGPGLLHGE) is disordered. Phosphoserine occurs at positions 141 and 147. Positions 154–164 (LEPGPGLLHGE) are enriched in low complexity. Residues 171–254 (IRLYQFLLDL…VKKKLTYQFS (84 aa)) constitute a DNA-binding region (ETS). DNA contacts are provided by Lys-218, Arg-231, Arg-234, and Lys-244.

It belongs to the ETS family. Binds DNA as a monomer. Can form homomers. Directly interacts with CEBPD/NF-IL6-beta; this interaction does not affect DNA-binding properties of each partner. Interacts with NONO/p54(nrb). Interacts with RUNX1/AML1. Interacts with GFI1; the interaction represses SPI1 transcriptional activity, hence blocks SPI1-induced macrophage differentiation of myeloid progenitor cells. Interacts with CEBPE. Interacts with IRF4/Pip and IRF8. Interacts with JUN. Interacts with RB1. Interacts with TBP.

It is found in the nucleus. With respect to regulation, transcriptional activity at macrophage-specific genes is inhibited by interaction with GFI1, which results in the inhibition of SPI1-induced macrophage differentiation of myeloid progenitor cells, but not that of the granulocyte lineage. In terms of biological role, pioneer transcription factor, which controls hematopoietic cell fate by decompacting stem cell heterochromatin and allowing other transcription factors to enter otherwise inaccessible genomic sites. Once in open chromatin, can directly control gene expression by binding genetic regulatory elements and can also more broadly influence transcription by recruiting transcription factors, such as interferon regulatory factors (IRFs), to otherwise inaccessible genomic regions. Transcriptionally activates genes important for myeloid and lymphoid lineages, such as CSF1R or FCER1A. Transcriptional activation from certain promoters, possibly containing low affinity binding sites, is achieved cooperatively with other transcription factors. FCER1A transactivation is achieved in cooperation with GATA1. May be particularly important for the pro- to pre-B cell transition. Binds (via the ETS domain) onto the purine-rich DNA core sequence 5'-GAGGAA-3', also known as the PU-box. In vitro can bind RNA and interfere with pre-mRNA splicing. The polypeptide is Transcription factor PU.1 (Spi1) (Rattus norvegicus (Rat)).